Here is a 264-residue protein sequence, read N- to C-terminus: uncharacterized protein (264 aa).

A divalent metal cation is bound by residues His-5, His-7, Glu-93, His-134, His-158, and Asp-208.

The protein belongs to the metallo-dependent hydrolases superfamily. TatD-type hydrolase family. It depends on a divalent metal cation as a cofactor.

This is an uncharacterized protein from Mycobacterium tuberculosis (strain ATCC 25618 / H37Rv).